Here is a 154-residue protein sequence, read N- to C-terminus: Small ribosomal subunit protein uS19 (154 aa).

This sequence belongs to the universal ribosomal protein uS19 family.

The polypeptide is Small ribosomal subunit protein uS19 (RPS15) (Oryza sativa subsp. japonica (Rice)).